We begin with the raw amino-acid sequence, 914 residues long: Serine/threonine-protein kinase MST20 (914 aa).

The segment covering 1–12 (MDGHSNFTQPSD) has biased composition (polar residues). Disordered regions lie at residues 1–140 (MDGH…QLQN), 156–184 (NQYS…LTFN), and 251–286 (AMSE…VLRK). 3 stretches are compositionally biased toward low complexity: residues 13 to 26 (TSHA…SSSS), 63 to 72 (RSSTSLRRAP), and 79 to 97 (TPTS…PSSS). Positions 122-136 (ARDRDSDPARNDHGH) are enriched in basic and acidic residues. Residues 156 to 166 (NQYSAASHRRS) are compositionally biased toward basic residues. Residues 175-184 (PQSSNSLTFN) show a composition bias toward polar residues. Over residues 271 to 280 (RYSDETKEPK) the composition is skewed to basic and acidic residues. The region spanning 306–319 (ISAPENPVHVTHVG) is the CRIB domain. The interval 408-615 (SPMISPPASP…RHRSRQSNGL (208 aa)) is disordered. Composition is skewed to low complexity over residues 516 to 548 (AYPA…QAQA) and 562 to 576 (QPQA…SQHQ). Polar residues predominate over residues 577-586 (YSRPTDANGA). Over residues 587–596 (QQTQRPQQPQ) the composition is skewed to low complexity. The Protein kinase domain maps to 634 to 885 (YRSFTKIGQG…AHDLLRHEFM (252 aa)). ATP contacts are provided by residues 640-648 (IGQGASGGV) and Lys663. Asp753 functions as the Proton acceptor in the catalytic mechanism.

It belongs to the protein kinase superfamily. STE Ser/Thr protein kinase family. STE20 subfamily.

It is found in the cytoplasm. The protein localises to the nucleus. The catalysed reaction is L-seryl-[protein] + ATP = O-phospho-L-seryl-[protein] + ADP + H(+). It carries out the reaction L-threonyl-[protein] + ATP = O-phospho-L-threonyl-[protein] + ADP + H(+). Its function is as follows. MAP4K component of the MAPK pathway required for the mating pheromone response and the regulation of cell polarity and cell cycle. Phosphorylates histone H2B to form H2BS10ph. Is involved in conidiation, aerial hyphal growth and infection-related morphogenesis. In Pyricularia oryzae (strain 70-15 / ATCC MYA-4617 / FGSC 8958) (Rice blast fungus), this protein is Serine/threonine-protein kinase MST20 (MST20).